A 274-amino-acid chain; its full sequence is Shikimate dehydrogenase (NADP(+)) (274 aa).

Residues 15–17 and Thr-62 each bind shikimate; that span reads SKS. The Proton acceptor role is filled by Lys-66. Asp-78 is a binding site for NADP(+). Shikimate-binding residues include Asn-87 and Asp-102. NADP(+) contacts are provided by residues 127–131 and Met-215; that span reads GAGGA. Residue Tyr-217 coordinates shikimate. Gly-239 provides a ligand contact to NADP(+).

This sequence belongs to the shikimate dehydrogenase family. Homodimer.

The enzyme catalyses shikimate + NADP(+) = 3-dehydroshikimate + NADPH + H(+). The protein operates within metabolic intermediate biosynthesis; chorismate biosynthesis; chorismate from D-erythrose 4-phosphate and phosphoenolpyruvate: step 4/7. Functionally, involved in the biosynthesis of the chorismate, which leads to the biosynthesis of aromatic amino acids. Catalyzes the reversible NADPH linked reduction of 3-dehydroshikimate (DHSA) to yield shikimate (SA). The polypeptide is Shikimate dehydrogenase (NADP(+)) (Dechloromonas aromatica (strain RCB)).